We begin with the raw amino-acid sequence, 228 residues long: Lipoprotein LpqN (228 aa).

The first 19 residues, Met-1–Gly-19, serve as a signal peptide directing secretion. The N-palmitoyl cysteine moiety is linked to residue Cys-20. A lipid anchor (S-diacylglycerol cysteine) is attached at Cys-20. Residues Thr-26 to Gln-53 are disordered. Over residues Ser-28–Ala-52 the composition is skewed to low complexity.

As to quaternary structure, interacts with the periplasmic loop domains of the mycolate transporters MmpL3 and MmpL11. Also interacts with secreted cell envelope biosynthetic enzymes such as Ag85A. These interactions are weak and may require a putative mycobacterial adapter protein or molecule. Interacts with human ubiquitin ligase CBL.

The protein resides in the cell membrane. It is found in the secreted. In terms of biological role, involved in cell envelope biogenesis. May act as a membrane fusion protein, connecting MmpL transporters with periplasmic proteins, and play a role in cell envelope lipid changes during biofilm maturation. Functionally, is also a virulence factor required for intracellular survival. Associates with CBL, a host ubiquitin ligase, and probably blocks the normal functions of CBL and disturbs CBL-mediated antibacterial activity. Interaction counteracts antibacterial defense but causes a reciprocal enhancement of antiviral defense. The chain is Lipoprotein LpqN from Mycobacterium tuberculosis (strain ATCC 25618 / H37Rv).